Consider the following 215-residue polypeptide: Peptide methionine sulfoxide reductase MsrA (215 aa).

Cys57 is a catalytic residue.

It belongs to the MsrA Met sulfoxide reductase family.

It catalyses the reaction L-methionyl-[protein] + [thioredoxin]-disulfide + H2O = L-methionyl-(S)-S-oxide-[protein] + [thioredoxin]-dithiol. The enzyme catalyses [thioredoxin]-disulfide + L-methionine + H2O = L-methionine (S)-S-oxide + [thioredoxin]-dithiol. Has an important function as a repair enzyme for proteins that have been inactivated by oxidation. Catalyzes the reversible oxidation-reduction of methionine sulfoxide in proteins to methionine. This is Peptide methionine sulfoxide reductase MsrA from Saccharophagus degradans (strain 2-40 / ATCC 43961 / DSM 17024).